A 391-amino-acid polypeptide reads, in one-letter code: UPF0229 protein CLL_A3091 (391 aa).

Disordered regions lie at residues 1-23 (MAIFRDRTDKQVDHDRAIEDKRR) and 75-107 (VATGTGEEKRGDKIESGSKKAMGKGNKGAGNEE). Over residues 80–92 (GEEKRGDKIESGS) the composition is skewed to basic and acidic residues.

This sequence belongs to the UPF0229 family.

The chain is UPF0229 protein CLL_A3091 from Clostridium botulinum (strain Eklund 17B / Type B).